We begin with the raw amino-acid sequence, 317 residues long: Epidermal growth factor-like protein (317 aa).

A signal peptide spans 1–23 (MDFKIFLFLTAIFMIVGVTVSTA). The segment at 24-33 (TTNPTAPRAY) is may be required for E.coli agglutination activity. EGF-like domains are found at residues 93-128 (HCTP…GKCI), 130-161 (VCPG…RYCT), 163-195 (GCTR…GTCQ), 208-243 (ACEP…KVCA), 245-280 (KCSQ…NRCI), and 282-315 (YCAA…NVCV). 18 disulfides stabilise this stretch: cysteine 98-cysteine 107, cysteine 102-cysteine 113, cysteine 115-cysteine 127, cysteine 131-cysteine 140, cysteine 135-cysteine 145, cysteine 147-cysteine 160, cysteine 164-cysteine 174, cysteine 168-cysteine 180, cysteine 182-cysteine 194, cysteine 213-cysteine 222, cysteine 217-cysteine 228, cysteine 230-cysteine 242, cysteine 246-cysteine 255, cysteine 250-cysteine 261, cysteine 263-cysteine 279, cysteine 283-cysteine 292, cysteine 287-cysteine 298, and cysteine 300-cysteine 314.

The protein resides in the secreted. In terms of biological role, binds to lipopolysaccharides (LPS) present on the cell walls of Gram-negative bacteria, behaving as a pattern recognition receptor (PRR). Induces bacterial aggregation and enhances their subsequent clearance by the innate immune response. Binds to the inner core oligosaccharides region of rough-type bacterial LPS. Displays activity against the Gram-negative bacterium E.coli. Does not display any activity against the Gram-positive bacterium S.aureus or the fungi C.albicans. In Holotrichia diomphalia (Korean black chafer), this protein is Epidermal growth factor-like protein.